A 169-amino-acid chain; its full sequence is Putative phosphoesterase SERP0604 (169 aa).

His34 (proton donor) is an active-site residue. 2 short sequence motifs (HXTX) span residues 34 to 37 (HITI) and 115 to 118 (HFTI). His115 (proton acceptor) is an active-site residue.

The protein belongs to the 2H phosphoesterase superfamily. YjcG family.

The sequence is that of Putative phosphoesterase SERP0604 from Staphylococcus epidermidis (strain ATCC 35984 / DSM 28319 / BCRC 17069 / CCUG 31568 / BM 3577 / RP62A).